A 700-amino-acid polypeptide reads, in one-letter code: Elongation factor G (700 aa).

One can recognise a tr-type G domain in the interval 10-286 (NKVRNIGIMA…AVIDYLPNPL (277 aa)). GTP contacts are provided by residues 19–26 (AHIDAGKT), 83–87 (DTPGH), and 137–140 (NKMD).

It belongs to the TRAFAC class translation factor GTPase superfamily. Classic translation factor GTPase family. EF-G/EF-2 subfamily.

It localises to the cytoplasm. In terms of biological role, catalyzes the GTP-dependent ribosomal translocation step during translation elongation. During this step, the ribosome changes from the pre-translocational (PRE) to the post-translocational (POST) state as the newly formed A-site-bound peptidyl-tRNA and P-site-bound deacylated tRNA move to the P and E sites, respectively. Catalyzes the coordinated movement of the two tRNA molecules, the mRNA and conformational changes in the ribosome. The sequence is that of Elongation factor G from Rhodococcus erythropolis (strain PR4 / NBRC 100887).